The primary structure comprises 815 residues: Dual specificity tyrosine-phosphorylation-regulated kinase mbk-2 (815 aa).

Disordered stretches follow at residues 1–49 (MAAL…NYTR), 67–146 (PSSF…PLGT), 185–204 (YEFP…SQQH), and 298–395 (ALPS…FRPE). Polar residues-rich tracts occupy residues 7-25 (FTRN…TQQG) and 40-49 (SKMSNINYTR). Positions 68–78 (SSFSGASSSSS) are enriched in low complexity. Polar residues-rich tracts occupy residues 119–140 (SGNT…TSNL) and 190–204 (GQAQ…SQQH). Over residues 301–316 (SVGTSSSNGSSNSSSG) the composition is skewed to low complexity. Over residues 325 to 351 (LMTQSIGGPNKHLSASHSTLNTASTHD) the composition is skewed to polar residues. Phosphoserine; by cdk-1 is present on S361. A compositionally biased stretch (low complexity) spans 363 to 391 (SNESLSRSHTSSSGGSQGGHNSNSGSNSG). The Protein kinase domain maps to 460 to 773 (YEVLKVIGKG…PAQALKHKWL (314 aa)). Residues 466–474 (IGKGSFGQV) and K489 each bind ATP. The Proton acceptor role is filled by D586. A Phosphotyrosine; by autocatalysis modification is found at Y620.

This sequence belongs to the protein kinase superfamily. CMGC Ser/Thr protein kinase family. MNB/DYRK subfamily. In terms of assembly, part of a complex, consisting of pseudophosphatases egg-3, egg-4, egg-5 and kinase mbk-2. Interacts (via Tyr-618 and Tyr-620) with egg-4 (via tyrosine-protein phosphatase domain) and egg-5 (via tyrosine-protein phosphatase domain); mbk-2 tyrosine phosphorylation enhances the interaction. The interaction inhibits mbk-2 kinase activity and is required for mbk-2 oocyte cortex localization. Interacts (via N-terminus) with egg-3 (via tyrosine-protein phosphatase domain); the interaction does not affect mbk-2 kinase activity, is enhanced by mbk-2 tyrosine phosphorylation status and requires prior binding of mbk-2 to egg-4 and egg-5. Requires Mg(2+) as cofactor. Post-translationally, autophosphorylated.

The protein localises to the cytoplasm. Its subcellular location is the cell cortex. The enzyme catalyses L-seryl-[protein] + ATP = O-phospho-L-seryl-[protein] + ADP + H(+). It catalyses the reaction L-threonyl-[protein] + ATP = O-phospho-L-threonyl-[protein] + ADP + H(+). It carries out the reaction L-tyrosyl-[protein] + ATP = O-phospho-L-tyrosyl-[protein] + ADP + H(+). Its activity is regulated as follows. Activated during oocyte maturation by phosphorylation on Ser-361 by cdk-1. The pseudotyrosine phosphatases egg-4 and egg-5 sequester activated mbk-2 until the meiotic divisions and inhibit mbk-2 kinase activity directly, using a mixed-inhibition mechanism that does not involve tyrosine dephosphorylation. In terms of biological role, required for oocyte-to-zygote transition in which it phosphorylates oocyte proteins, including mei-1, oma-1, oma-2, mex-5, and mex-6, modifying their activity and/or stability following meiosis. Through phosphorylation of P granule components including meg-1, promotes the disassembly of zygotic P granules in the anterior cytoplasm during zygote polarization, and thus plays a role in P granule distribution and segregation in early stage embryos following meiosis. Functions in both spindle positioning and in the posterior localization of cytoplasmic determinants, including pie-1, pos-1, and pgl-1, in early embryos. Involved in the asymmetric distribution of plk-1 at the 2-cell embryonic stage. This Caenorhabditis briggsae protein is Dual specificity tyrosine-phosphorylation-regulated kinase mbk-2.